The chain runs to 44 residues: Protein PsbN (44 aa).

A helical transmembrane segment spans residues F6 to I26.

It belongs to the PsbN family.

It localises to the plastid. It is found in the chloroplast thylakoid membrane. Functionally, may play a role in photosystem I and II biogenesis. The protein is Protein PsbN of Ostreococcus tauri.